A 332-amino-acid chain; its full sequence is Multiple virulence factor regulator MvfR (332 aa).

The HTH lysR-type domain maps to 4 to 61 (HNLNHVNMFLQVIASGSISSAARILRKSHTAVSSAVSNLEIDLCVELVRRDGYKVEPT). Positions 21–40 (ISSAARILRKSHTAVSSAVS) form a DNA-binding region, H-T-H motif.

This sequence belongs to the LysR transcriptional regulatory family. Forms homooligomers.

It is found in the cell inner membrane. It localises to the secreted. Both 3,4-dihydroxy-2-heptylquinoline (PQS) and its precursor 4-hydroxy-2-heptylquinoline (HHQ) function as ligands and promote MvfR DNA-binding activity leading to transcriptional activation. Its function is as follows. Transcription regulator that plays a critical role in virulence by positively regulating the expression of multiple quorum sensing (QS)-regulated virulence factors, genes involved in protein secretion, translation, response to oxidative stress and the phnAB operon. At the stationary phase, negatively autoregulates its function through cleavage and translocation to the extracellular space. The chain is Multiple virulence factor regulator MvfR from Pseudomonas aeruginosa (strain ATCC 15692 / DSM 22644 / CIP 104116 / JCM 14847 / LMG 12228 / 1C / PRS 101 / PAO1).